A 543-amino-acid chain; its full sequence is CTP synthase (543 aa).

The interval 1-267 (MTKYVFVTGG…ATQVLNLLNL (267 aa)) is amidoligase domain. Ser13 contributes to the CTP binding site. Ser13 contributes to the UTP binding site. ATP is bound by residues 14 to 19 (SIGKGI) and Asp71. Residues Asp71 and Glu141 each contribute to the Mg(2+) site. Residues 148-150 (DIE), 188-193 (KTKPTQ), and Lys224 each bind CTP. Residues 188–193 (KTKPTQ) and Lys224 each bind UTP. The Glutamine amidotransferase type-1 domain maps to 292 to 534 (EVAIVGKYVR…LAAAAKNSNR (243 aa)). Gly354 contributes to the L-glutamine binding site. Residue Cys381 is the Nucleophile; for glutamine hydrolysis of the active site. Residues 382 to 385 (LGMQ), Glu405, and Arg462 contribute to the L-glutamine site. Active-site residues include His507 and Glu509.

It belongs to the CTP synthase family. Homotetramer.

It carries out the reaction UTP + L-glutamine + ATP + H2O = CTP + L-glutamate + ADP + phosphate + 2 H(+). The catalysed reaction is L-glutamine + H2O = L-glutamate + NH4(+). The enzyme catalyses UTP + NH4(+) + ATP = CTP + ADP + phosphate + 2 H(+). Its pathway is pyrimidine metabolism; CTP biosynthesis via de novo pathway; CTP from UDP: step 2/2. With respect to regulation, allosterically activated by GTP, when glutamine is the substrate; GTP has no effect on the reaction when ammonia is the substrate. The allosteric effector GTP functions by stabilizing the protein conformation that binds the tetrahedral intermediate(s) formed during glutamine hydrolysis. Inhibited by the product CTP, via allosteric rather than competitive inhibition. Its function is as follows. Catalyzes the ATP-dependent amination of UTP to CTP with either L-glutamine or ammonia as the source of nitrogen. Regulates intracellular CTP levels through interactions with the four ribonucleotide triphosphates. In Thermosynechococcus vestitus (strain NIES-2133 / IAM M-273 / BP-1), this protein is CTP synthase.